Here is a 455-residue protein sequence, read N- to C-terminus: ATP-dependent protease ATPase subunit HslU (455 aa).

Residues V23, G65–E70, D266, E333, and R405 each bind ATP.

This sequence belongs to the ClpX chaperone family. HslU subfamily. A double ring-shaped homohexamer of HslV is capped on each side by a ring-shaped HslU homohexamer. The assembly of the HslU/HslV complex is dependent on binding of ATP.

The protein localises to the cytoplasm. Its function is as follows. ATPase subunit of a proteasome-like degradation complex; this subunit has chaperone activity. The binding of ATP and its subsequent hydrolysis by HslU are essential for unfolding of protein substrates subsequently hydrolyzed by HslV. HslU recognizes the N-terminal part of its protein substrates and unfolds these before they are guided to HslV for hydrolysis. The polypeptide is ATP-dependent protease ATPase subunit HslU (Xanthomonas oryzae pv. oryzae (strain MAFF 311018)).